Here is a 362-residue protein sequence, read N- to C-terminus: MSKIYNFNPGPAMLPKEVLLEIKKNFLNWNNSGFSITEISHRSSSFIEFTIQVEKDLRNLLHIPENYNILFSHGGARGQFSAIPMNLIKKFKKPDYINSGYWSKCAAKEAKKYCEPNIINVKRYTKNKQKYIESPINWKITSKHTYLHYCPNETIEGIEIFEEPILLNKIIIGDFSSTILSRKINIKKYGMIYACAQKNIGPAGITIIIIRNDLLISCKKKIPSILDYQLLFKSKSMLNTPSIFSWYVSGLVFKWIKNLGGLNVIEKKNIKKAKILYKYLNSTNFYYNCILPSNQSRMNVTFNLYKNELTNFFIQESEKSGLYGLKGHSIIGGLRASIYNAMPIEGVKKLIQFMKNFEKKFG.

R42 serves as a coordination point for L-glutamate. Residues 76–77 (AR), W102, T154, D174, and Q197 contribute to the pyridoxal 5'-phosphate site. K198 is subject to N6-(pyridoxal phosphate)lysine. 239–240 (NT) is a binding site for pyridoxal 5'-phosphate.

Belongs to the class-V pyridoxal-phosphate-dependent aminotransferase family. SerC subfamily. In terms of assembly, homodimer. The cofactor is pyridoxal 5'-phosphate.

The protein localises to the cytoplasm. It carries out the reaction O-phospho-L-serine + 2-oxoglutarate = 3-phosphooxypyruvate + L-glutamate. The enzyme catalyses 4-(phosphooxy)-L-threonine + 2-oxoglutarate = (R)-3-hydroxy-2-oxo-4-phosphooxybutanoate + L-glutamate. Its pathway is amino-acid biosynthesis; L-serine biosynthesis; L-serine from 3-phospho-D-glycerate: step 2/3. It participates in cofactor biosynthesis; pyridoxine 5'-phosphate biosynthesis; pyridoxine 5'-phosphate from D-erythrose 4-phosphate: step 3/5. Its function is as follows. Catalyzes the reversible conversion of 3-phosphohydroxypyruvate to phosphoserine and of 3-hydroxy-2-oxo-4-phosphonooxybutanoate to phosphohydroxythreonine. The chain is Phosphoserine aminotransferase from Buchnera aphidicola subsp. Cinara cedri (strain Cc).